The primary structure comprises 90 residues: Probable Fe(2+)-trafficking protein (90 aa).

This sequence belongs to the Fe(2+)-trafficking protein family.

In terms of biological role, could be a mediator in iron transactions between iron acquisition and iron-requiring processes, such as synthesis and/or repair of Fe-S clusters in biosynthetic enzymes. In Stutzerimonas stutzeri (strain A1501) (Pseudomonas stutzeri), this protein is Probable Fe(2+)-trafficking protein.